The chain runs to 51 residues: Protein Tat (51 aa).

Residues 1–25 (EAETATKSCSGRQANQVSLPKQPAS) are compositionally biased toward polar residues. The tract at residues 1–51 (EAETATKSCSGRQANQVSLPKQPASQPRGDPTGPKESKKKVETETETDPVN) is disordered. Lys-21 is covalently cross-linked (Glycyl lysine isopeptide (Lys-Gly) (interchain with G-Cter in ubiquitin)). Residues 28 to 30 (RGD) carry the Cell attachment site motif. Residues 33-43 (GPKESKKKVET) are compositionally biased toward basic and acidic residues.

Belongs to the lentiviruses Tat family. Interacts with host CCNT1. Associates with the P-TEFb complex composed at least of Tat, P-TEFb (CDK9 and CCNT1), TAR RNA, RNA Pol II. Recruits the HATs CREBBP, TAF1/TFIID, EP300, PCAF and GCN5L2. Interacts with host KAT5/Tip60; this interaction targets the latter to degradation. Interacts with the host deacetylase SIRT1. Interacts with host capping enzyme RNGTT; this interaction stimulates RNGTT. Binds to host KDR, and to the host integrins ITGAV/ITGB3 and ITGA5/ITGB1. Interacts with host KPNB1/importin beta-1 without previous binding to KPNA1/importin alpha-1. Interacts with EIF2AK2. Interacts with host nucleosome assembly protein NAP1L1; this interaction may be required for the transport of Tat within the nucleus, since the two proteins interact at the nuclear rim. Interacts with host C1QBP/SF2P32; this interaction involves lysine-acetylated Tat. Interacts with the host chemokine receptors CCR2, CCR3 and CXCR4. Interacts with host DPP4/CD26; this interaction may trigger an anti-proliferative effect. Interacts with host LDLR. Interacts with the host extracellular matrix metalloproteinase MMP1. Interacts with host PRMT6; this interaction mediates Tat's methylation. Interacts with, and is ubiquitinated by MDM2/Hdm2. Interacts with host PSMC3 and HTATIP2. Interacts with STAB1; this interaction may overcome SATB1-mediated repression of IL2 and IL2RA (interleukin) in T cells by binding to the same domain than HDAC1. Interacts (when acetylated) with human CDK13, thereby increasing HIV-1 mRNA splicing and promoting the production of the doubly spliced HIV-1 protein Nef. In terms of processing, acetylation by EP300, CREBBP, GCN5L2/GCN5 and PCAF regulates the transactivation activity of Tat. Post-translationally, phosphorylated by EIF2AK2 on serine and threonine residues adjacent to the basic region important for TAR RNA binding and function. Phosphorylation of Tat by EIF2AK2 is dependent on the prior activation of EIF2AK2 by dsRNA. Asymmetrical arginine methylation by host PRMT6 seems to diminish the transactivation capacity of Tat and affects the interaction with host CCNT1. In terms of processing, polyubiquitination by MDM2 does not target Tat to degradation, but activates its transactivation function and fosters interaction with CCNT1 and TAR RNA.

It is found in the host nucleus. Its subcellular location is the host nucleolus. It localises to the host cytoplasm. The protein resides in the secreted. Its function is as follows. Transcriptional activator that increases RNA Pol II processivity, thereby increasing the level of full-length viral transcripts. Recognizes a hairpin structure at the 5'-LTR of the nascent viral mRNAs referred to as the transactivation responsive RNA element (TAR) and recruits the cyclin T1-CDK9 complex (P-TEFb complex) that will in turn hyperphosphorylate the RNA polymerase II to allow efficient elongation. The CDK9 component of P-TEFb and other Tat-activated kinases hyperphosphorylate the C-terminus of RNA Pol II that becomes stabilized and much more processive. Other factors such as HTATSF1/Tat-SF1, SUPT5H/SPT5, and HTATIP2 are also important for Tat's function. Besides its effect on RNA Pol II processivity, Tat induces chromatin remodeling of proviral genes by recruiting the histone acetyltransferases (HATs) CREBBP, EP300 and PCAF to the chromatin. This also contributes to the increase in proviral transcription rate, especially when the provirus integrates in transcriptionally silent region of the host genome. To ensure maximal activation of the LTR, Tat mediates nuclear translocation of NF-kappa-B by interacting with host RELA. Through its interaction with host TBP, Tat may also modulate transcription initiation. Tat can reactivate a latently infected cell by penetrating in it and transactivating its LTR promoter. In the cytoplasm, Tat is thought to act as a translational activator of HIV-1 mRNAs. Extracellular circulating Tat can be endocytosed by surrounding uninfected cells via the binding to several surface receptors such as CD26, CXCR4, heparan sulfate proteoglycans (HSPG) or LDLR. Neurons are rarely infected, but they internalize Tat via their LDLR. Endosomal low pH allows Tat to cross the endosome membrane to enter the cytosol and eventually further translocate into the nucleus, thereby inducing severe cell dysfunctions ranging from cell activation to cell death. Through its interaction with nuclear HATs, Tat is potentially able to control the acetylation-dependent cellular gene expression. Tat seems to inhibit the HAT activity of KAT5/Tip60 and TAF1, and consequently modify the expression of specific cellular genes. Modulates the expression of many cellular genes involved in cell survival, proliferation or in coding for cytokines (such as IL10) or cytokine receptors. May be involved in the derepression of host interleukin IL2 expression. Mediates the activation of cyclin-dependent kinases and dysregulation of microtubule network. Tat plays a role in T-cell and neurons apoptosis. Tat induced neurotoxicity and apoptosis probably contribute to neuroAIDS. Host extracellular matrix metalloproteinase MMP1 cleaves Tat and decreases Tat's mediated neurotoxicity. Circulating Tat also acts as a chemokine-like and/or growth factor-like molecule that binds to specific receptors on the surface of the cells, affecting many cellular pathways. In the vascular system, Tat binds to ITGAV/ITGB3 and ITGA5/ITGB1 integrins dimers at the surface of endothelial cells and competes with bFGF for heparin-binding sites, leading to an excess of soluble bFGF. Binds to KDR/VEGFR-2. All these Tat-mediated effects enhance angiogenesis in Kaposi's sarcoma lesions. The chain is Protein Tat from Homo sapiens (Human).